We begin with the raw amino-acid sequence, 421 residues long: CinA-like protein (421 aa).

Belongs to the CinA family.

This chain is CinA-like protein, found in Mycobacterium sp. (strain MCS).